The sequence spans 552 residues: Glutamine--tRNA ligase (552 aa).

A 'HIGH' region motif is present at residues 34 to 44 (PEPNGYLHIGH). Residues 35-37 (EPN) and 41-47 (HIGHAKS) contribute to the ATP site. L-glutamine contacts are provided by D67 and Y212. ATP is bound by residues T231, 261-262 (RL), and 269-271 (MSK). Positions 268 to 272 (IMSKR) match the 'KMSKS' region motif.

Belongs to the class-I aminoacyl-tRNA synthetase family. In terms of assembly, monomer.

Its subcellular location is the cytoplasm. It catalyses the reaction tRNA(Gln) + L-glutamine + ATP = L-glutaminyl-tRNA(Gln) + AMP + diphosphate. This Pectobacterium atrosepticum (strain SCRI 1043 / ATCC BAA-672) (Erwinia carotovora subsp. atroseptica) protein is Glutamine--tRNA ligase.